The sequence spans 827 residues: Glycerol-3-phosphate acyltransferase (827 aa).

The HXXXXD motif signature appears at Cys-309–Ile-314.

It belongs to the GPAT/DAPAT family.

The protein localises to the cell inner membrane. It carries out the reaction sn-glycerol 3-phosphate + an acyl-CoA = a 1-acyl-sn-glycero-3-phosphate + CoA. Its pathway is phospholipid metabolism; CDP-diacylglycerol biosynthesis; CDP-diacylglycerol from sn-glycerol 3-phosphate: step 1/3. The sequence is that of Glycerol-3-phosphate acyltransferase from Ectopseudomonas mendocina (strain ymp) (Pseudomonas mendocina).